The following is an 85-amino-acid chain: MISFKTVIVCLFLWVVIIGARHRPVKLDDEIFRDYHIDIDPSKSSCRCDDDGAEGSGTVWYGNCPSGWAMCTSSHYSAFAECCKQ.

Positions 1–20 are cleaved as a signal peptide; sequence MISFKTVIVCLFLWVVIIGA. 3 disulfide bridges follow: cysteine 46–cysteine 82, cysteine 48–cysteine 71, and cysteine 64–cysteine 83.

In terms of biological role, probable toxin. This is N.vectensis toxin 6 from Nematostella vectensis (Starlet sea anemone).